Here is a 199-residue protein sequence, read N- to C-terminus: HTH-type transcriptional regulator BetI (199 aa).

Positions 8-68 constitute an HTH tetR-type domain; that stretch reads EIRKPQLVKA…ETMREILRQL (61 aa). The H-T-H motif DNA-binding region spans 31 to 50; the sequence is SISLISKEAGVSTGIINHYF.

It functions in the pathway amine and polyamine biosynthesis; betaine biosynthesis via choline pathway [regulation]. Functionally, repressor involved in the biosynthesis of the osmoprotectant glycine betaine. It represses transcription of the choline transporter BetT and the genes of BetAB involved in the synthesis of glycine betaine. This chain is HTH-type transcriptional regulator BetI, found in Vibrio parahaemolyticus serotype O3:K6 (strain RIMD 2210633).